A 257-amino-acid polypeptide reads, in one-letter code: Very long chain fatty acid elongase F (257 aa).

The next 7 membrane-spanning stretches (helical) occupy residues 10 to 30 (IPVVSNPWITMGTLIGYLLFV), 55 to 75 (IFQILYNGLILVLGVHFLFVL), 98 to 118 (LICTLYLVNKFVDLVETIFFV), 135 to 155 (FAMAFFGYLYYCFHGYGGVAF), 158 to 178 (CLLNTAVHVIMYAYYYLSSIS), 191 to 211 (ITIAQLVQFAIILLHCTITLA), and 221 to 241 (LTYGCGSLSAFFAVIFSQFYY).

Belongs to the ELO family. In terms of tissue distribution, highly expressed in females. Little or no expression detected in males.

Its subcellular location is the endoplasmic reticulum membrane. It carries out the reaction a very-long-chain acyl-CoA + malonyl-CoA + H(+) = a very-long-chain 3-oxoacyl-CoA + CO2 + CoA. Its pathway is lipid metabolism; fatty acid biosynthesis. Its function is as follows. Condensing enzyme that elongates saturated and monounsaturated very long chain fatty acids, to yield products up to 30 carbons in length. May also elongate diunsaturated fatty acids. Important for courtship behavior where it probably has a role in female pheromone biosynthesis. The chain is Very long chain fatty acid elongase F from Drosophila melanogaster (Fruit fly).